The sequence spans 233 residues: Coenzyme Q-binding protein COQ10 homolog, mitochondrial (233 aa).

Residues 1–34 constitute a mitochondrion transit peptide; it reads MAEKATSLFLRAMEISEKQSFDVMRRNSSCTIRH.

The protein belongs to the COQ10 family. In terms of assembly, interacts with coenzyme Q.

Its subcellular location is the mitochondrion inner membrane. Its function is as follows. Required for the function of coenzyme Q in the respiratory chain. May serve as a chaperone or may be involved in the transport of Q6 from its site of synthesis to the catalytic sites of the respiratory complexes. The sequence is that of Coenzyme Q-binding protein COQ10 homolog, mitochondrial from Danio rerio (Zebrafish).